Here is an 850-residue protein sequence, read N- to C-terminus: Mitochondrial escape protein 2 (850 aa).

The N-terminal 44 residues, 1–44 (MLLVRTTSLNVSRMPVPCLARGIGILKGKYRLANLMNAQPSVRH), are a transit peptide targeting the mitochondrion. Residues 44–66 (HVSSEIQQKDQQAGESNTATDTG) are disordered. Residues 45 to 287 (VSSEIQQKDQ…VSNFFTNHTR (243 aa)) lie on the Mitochondrial matrix side of the membrane. The segment covering 47-64 (SEIQQKDQQAGESNTATD) has biased composition (polar residues). An RRM domain is found at 198 to 272 (TTIVIKFQGP…TVLHIQYENI (75 aa)). The helical transmembrane segment at 288 to 308 (IAIPVLFALLSIFAVLVFDPI) threads the bilayer. The Mitochondrial intermembrane portion of the chain corresponds to 309 to 850 (REFSIEQKIT…CEEEIKNLSK (542 aa)). Residues 607 to 621 (KGENVKEPESEKETA) are compositionally biased toward basic and acidic residues. Residues 607-633 (KGENVKEPESEKETAENNDSDSEADTS) are disordered.

The protein belongs to the YME2 family.

It is found in the mitochondrion inner membrane. Its function is as follows. Plays a role in maintaining the mitochondrial genome and in controlling the mtDNA escape. Involved in the regulation of mtDNA nucleotide structure and number. May have a dispensable role in early maturation of pre-rRNA. This Saccharomyces cerevisiae (strain ATCC 204508 / S288c) (Baker's yeast) protein is Mitochondrial escape protein 2 (YME2).